The following is a 793-amino-acid chain: E3 UFM1-protein ligase 1 (793 aa).

Positions 2–212 (AADWEEIRRL…INNLLNLYGF (211 aa)) are required for E3 UFM1-protein ligase activity. 2 disordered regions span residues 405-472 (ALLE…RNKL) and 745-793 (GAEK…SVTE). A compositionally biased stretch (gly residues) spans 427 to 439 (EGGGSVKSGGGGN). Over residues 767-781 (SLQRELHSLSRDIKD) the composition is skewed to basic and acidic residues.

The protein belongs to the UFL1 family. Catalytic component of the UFM1 ribosome E3 ligase (UREL) complex. Interacts with E2-like enzyme UFC1.

Its subcellular location is the endoplasmic reticulum membrane. It is found in the cytoplasm. The protein localises to the cytosol. The protein resides in the nucleus. It localises to the chromosome. Its function is as follows. E3 protein ligase that mediates ufmylation, the covalent attachment of the ubiquitin-like modifier UFM1 to lysine residues on target proteins, and which plays a key role in various processes, such as ribosome recycling, response to DNA damage, interferon response or reticulophagy (also called ER-phagy). As part of the UREL complex, plays a key role in ribosome recycling by catalyzing mono-ufmylation of RPL26/uL24 subunit of the 60S ribosome. Ufmylation of RPL26/uL24 occurs on free 60S ribosomes following ribosome dissociation: it weakens the junction between post-termination 60S subunits and SEC61 translocons, promoting release and recycling of the large ribosomal subunit from the endoplasmic reticulum membrane. Ufmylation of RPL26/uL24 and subsequent 60S ribosome recycling either take place after normal termination of translation or after ribosome stalling during cotranslational translocation at the endoplasmic reticulum. Involved in reticulophagy in response to endoplasmic reticulum stress by mediating ufmylation of proteins such as CYB5R3 and RPN1, thereby promoting lysosomal degradation of ufmylated proteins. Ufmylation in response to endoplasmic reticulum stress is essential for processes such as hematopoiesis, blood vessel morphogenesis or inflammatory response. The polypeptide is E3 UFM1-protein ligase 1 (Danio rerio (Zebrafish)).